The sequence spans 467 residues: MTTTLWPQVLKQLEAVLNDQQFLTWIRPLEAVEEDNTLRLIAPSGFILDWVNKKLLSQIKQAVYLVAPVNTPEVTLEVGEYAIESFNEPENTSVPQPLRETKAEREAAEKAASSTSKKKSDSPPKKTIKHNLNTNFTFDTFVEGKANQLAAAAARQVADNPGGSYNPFFIYGGVGLGKTHLMHAIGNELMRRDPNARVVYLHSERFVADMVNALRHNKIDEFKRFYRSLDALLIDDIQFFAKKEQSQEEFFHTFNTLLEGNKQVILTSDRFPKEVDGLEDRLKSRFGWGLTIAVEPPEFEMRVAILMKKAAEFGFLLPDEVAFFIAKRLRGNVRDLEGALKRVGAFAQFTQQLVTVDLAKDALKDLLALQQKMVTLENIQKTVADYYKIRVADLLSKRRTRNIARPRQMSMAISKELTSHSLPEIGDAFGGRDHTTVLHAVRKINELKETDHRIEEDFNSLIRIITN.

Positions 1 to 85 (MTTTLWPQVL…LEVGEYAIES (85 aa)) are domain I, interacts with DnaA modulators. Residues 85 to 130 (SFNEPENTSVPQPLRETKAEREAAEKAASSTSKKKSDSPPKKTIKH) form a domain II region. The segment at 87–129 (NEPENTSVPQPLRETKAEREAAEKAASSTSKKKSDSPPKKTIK) is disordered. Over residues 99–109 (RETKAEREAAE) the composition is skewed to basic and acidic residues. Residues 131-347 (NLNTNFTFDT…GALKRVGAFA (217 aa)) form a domain III, AAA+ region region. The ATP site is built by Gly-175, Gly-177, Lys-178, and Thr-179. Residues 348–467 (QFTQQLVTVD…FNSLIRIITN (120 aa)) form a domain IV, binds dsDNA region.

The protein belongs to the DnaA family. As to quaternary structure, oligomerizes as a right-handed, spiral filament on DNA at oriC.

The protein localises to the cytoplasm. In terms of biological role, plays an essential role in the initiation and regulation of chromosomal replication. ATP-DnaA binds to the origin of replication (oriC) to initiate formation of the DNA replication initiation complex once per cell cycle. Binds the DnaA box (a 9 base pair repeat at the origin) and separates the double-stranded (ds)DNA. Forms a right-handed helical filament on oriC DNA; dsDNA binds to the exterior of the filament while single-stranded (ss)DNA is stabiized in the filament's interior. The ATP-DnaA-oriC complex binds and stabilizes one strand of the AT-rich DNA unwinding element (DUE), permitting loading of DNA polymerase. After initiation quickly degrades to an ADP-DnaA complex that is not apt for DNA replication. Binds acidic phospholipids. This chain is Chromosomal replication initiator protein DnaA, found in Hydrogenovibrio crunogenus (strain DSM 25203 / XCL-2) (Thiomicrospira crunogena).